The following is a 289-amino-acid chain: ATP synthase gamma chain (289 aa).

Belongs to the ATPase gamma chain family. In terms of assembly, F-type ATPases have 2 components, CF(1) - the catalytic core - and CF(0) - the membrane proton channel. CF(1) has five subunits: alpha(3), beta(3), gamma(1), delta(1), epsilon(1). CF(0) has three main subunits: a, b and c.

It is found in the cell inner membrane. Produces ATP from ADP in the presence of a proton gradient across the membrane. The gamma chain is believed to be important in regulating ATPase activity and the flow of protons through the CF(0) complex. This Coxiella burnetii (strain CbuG_Q212) (Coxiella burnetii (strain Q212)) protein is ATP synthase gamma chain.